Reading from the N-terminus, the 751-residue chain is Lanosterol synthase erg7A (751 aa).

The segment at 1-22 is disordered; that stretch reads MTGGPIASWRTAAQGHLTPDEN. Residues 147–189 form a PFTB 1 repeat; sequence ATEIKRYLFARQHPEDGGWGLHIEAHSSVFGTCMNYVALRLIG. The active-site Proton donor is D481. 3 PFTB repeats span residues 508-553, 585-625, and 634-675; these read LKDS…MIGY, KDKA…ASVG, and ARRG…VQTA.

Belongs to the terpene cyclase/mutase family.

Its subcellular location is the lipid droplet. It localises to the endoplasmic reticulum membrane. The catalysed reaction is (S)-2,3-epoxysqualene = lanosterol. It functions in the pathway steroid metabolism; ergosterol biosynthesis. Functionally, lanosterol synthase; part of the third module of ergosterol biosynthesis pathway that includes the late steps of the pathway. ERG7A and ERG7B catalyze the cyclization of (S)-2,3 oxidosqualene to lanosterol, a reaction that forms the sterol core. The third module or late pathway involves the ergosterol synthesis itself through consecutive reactions that mainly occur in the endoplasmic reticulum (ER) membrane. Firstly, the squalene synthase erg9 catalyzes the condensation of 2 farnesyl pyrophosphate moieties to form squalene, which is the precursor of all steroids. Squalene synthase is crucial for balancing the incorporation of farnesyl diphosphate (FPP) into sterol and nonsterol isoprene synthesis. Secondly, squalene is converted into lanosterol by the consecutive action of the squalene epoxidase erg1 and the lanosterol synthase erg7. Then, the delta(24)-sterol C-methyltransferase erg6 methylates lanosterol at C-24 to produce eburicol. Eburicol is the substrate of the sterol 14-alpha demethylase encoded by cyp51A and cyp51B, to yield 4,4,24-trimethyl ergosta-8,14,24(28)-trienol. The C-14 reductase erg24 then reduces the C14=C15 double bond which leads to 4,4-dimethylfecosterol. A sequence of further demethylations at C-4, involving the C-4 demethylation complex containing the C-4 methylsterol oxidases erg25A or erg25B, the sterol-4-alpha-carboxylate 3-dehydrogenase erg26 and the 3-keto-steroid reductase erg27, leads to the production of fecosterol via 4-methylfecosterol. The C-8 sterol isomerase erg2 then catalyzes the reaction which results in unsaturation at C-7 in the B ring of sterols and thus converts fecosterol to episterol. The sterol-C5-desaturase erg3B then catalyzes the introduction of a C-5 double bond in the B ring to produce 5-dehydroepisterol. The 2 other sterol-C5-desaturases, erg3A and erg3C, seem to be less important in ergosterol biosynthesis. The C-22 sterol desaturase erg5 further converts 5-dehydroepisterol into ergosta-5,7,22,24(28)-tetraen-3beta-ol by forming the C-22(23) double bond in the sterol side chain. Finally, ergosta-5,7,22,24(28)-tetraen-3beta-ol is substrate of the C-24(28) sterol reductases erg4A and erg4B to produce ergosterol. Possible alternative sterol biosynthetic pathways might exist from fecosterol to ergosterol, depending on the activities of the erg3 isoforms. The sequence is that of Lanosterol synthase erg7A from Aspergillus fumigatus (strain ATCC MYA-4609 / CBS 101355 / FGSC A1100 / Af293) (Neosartorya fumigata).